Here is a 502-residue protein sequence, read N- to C-terminus: Transmembrane prolyl 4-hydroxylase (502 aa).

A disordered region spans residues 1 to 29 (MAAAAVTGQRPETAAAEEASRPQWAPPDH). At 1 to 60 (MAAAAVTGQRPETAAAEEASRPQWAPPDHCQAQAAAGLGDGEDAPVRPLCKPRGICSRAY) the chain is on the cytoplasmic side. Residues 61–81 (FLVLMVFVHLYLGNVLALLLF) form a helical; Signal-anchor for type II membrane protein membrane-spanning segment. Residues 82-502 (VHYSNGDESS…RAYRDARVEL (421 aa)) lie on the Lumenal side of the membrane. A disordered region spans residues 89–111 (ESSDPGPQHRAQGPGPEPTLGPL). 2 consecutive EF-hand domains span residues 185–220 (TMQVSQLDLFRLLDQNRDGHLQLREVLAQTRLGNGW) and 224–259 (PESIQEMYAAIKADPDGDGVLSLQEFSNMDLRDFHK). 9 residues coordinate Ca(2+): Asp-198, Asn-200, Asp-202, His-204, Glu-209, Asp-237, Asp-239, Asp-241, and Glu-248. The Fe2OG dioxygenase domain occupies 310–460 (LSEPLQVVRY…KWIANNWINV (151 aa)). 2 residues coordinate Fe cation: His-328 and Asp-330. Residues Asn-348 and Asn-368 are each glycosylated (N-linked (GlcNAc...) asparagine). Fe cation is bound at residue Glu-374. Residue Asn-382 is glycosylated (N-linked (GlcNAc...) asparagine). Lys-451 provides a ligand contact to 2-oxoglutarate.

Homodimer. It depends on Fe(2+) as a cofactor. L-ascorbate is required as a cofactor. Glycosylated. Widely expressed with highest levels in adult pancreas, heart, skeletal muscle, brain, placenta, kidney and adrenal gland. Expressed at lower levels in epiphyseal cartilage and in fibroblasts.

The protein resides in the endoplasmic reticulum membrane. The enzyme catalyses L-prolyl-[hypoxia-inducible factor alpha subunit] + 2-oxoglutarate + O2 = trans-4-hydroxy-L-prolyl-[hypoxia-inducible factor alpha subunit] + succinate + CO2. Functionally, catalyzes the post-translational formation of 4-hydroxyproline in hypoxia-inducible factor (HIF) alpha proteins. Hydroxylates HIF1A at 'Pro-402' and 'Pro-564'. May function as a cellular oxygen sensor and, under normoxic conditions, may target HIF through the hydroxylation for proteasomal degradation via the von Hippel-Lindau ubiquitination complex. The chain is Transmembrane prolyl 4-hydroxylase (P4HTM) from Homo sapiens (Human).